Here is a 362-residue protein sequence, read N- to C-terminus: 2-oxoglutarate-dependent dioxygenase lolO1 (362 aa).

The Fe2OG dioxygenase domain maps to 199–312; it reads TWNYFLGQPV…RYSLVFFGHL (114 aa). Fe cation contacts are provided by His-222, Asp-224, and His-280. Arg-303 provides a ligand contact to 2-oxoglutarate.

This sequence belongs to the iron/ascorbate-dependent oxidoreductase family. Fe(2+) serves as cofactor.

Its pathway is alkaloid biosynthesis. In terms of biological role, 2-oxoglutarate-dependent dioxygenase; part of the gene cluster that mediates the biosynthesis of loline alkaloids, potent insecticidal agents composed of a pyrrolizidine ring system and an uncommon ether bridge linking carbons 2 and 7. Lolines are structurally differentiated by the various modifications of the L-amino group and include norloline, loline, N-methylloline, N-acetylloline, N-acetylnorloline, and N-formylloline. The first committed step is the condensation of O-acetyl-L-homoserine (derived from L-aspartic acid) and L-proline, probably catalyzed by the gamma-type pyridoxal 5'-phosphate(PLP)-dependent enzyme lolC, to give the diamino diacid, NACPP. Ensuing cyclization, decarboxylation, and acetylation steps yield 1-exo-acetamidopyrrolizidine (AcAP). LolO is required for installation of the ether bridge upon the pathway intermediate, 1-exo-acetamidopyrrolizidine (AcAP). In sequential 2-oxoglutarate- and O(2)-consuming steps, lolO removes hydrogens from C2 and C7 of AcAP to form both carbon-oxygen bonds in N-acetylnorloline (NANL), the precursor to all other lolines. The enzymes lolD, lolE, lolF and lolT have also been proposed to be involved in the ether-bridge installation. Further processing of the exocyclic moiety of NANL by fungal N-acetamidase (LolN), methyltransferase (LolM), and cytochrome P450 (LolP) enzymes, with occasional involvement of a plant acetyltransferase, generates the other known lolines. LolN transforms NANL to norlonine which is monomethylated and dimethylated to respectively lonine and N-methyllonine (NML) by lolM. LolP catalyzes hydroxylation of the methyl group in N-methylloline (NML) and further oxygenation to N-formylloline (NFL). A plant acetyltransferase is responsible for the acetylation of loline to form N-acetylloline (NAL). LolA might interact with aspartate kinase to prevent feedback inhibition of its activity by these end products and thereby promote production of l-homoserine from l-aspartate. This is 2-oxoglutarate-dependent dioxygenase lolO1 from Epichloe uncinata (Endophyte fungus).